Reading from the N-terminus, the 310-residue chain is Aspartate carbamoyltransferase catalytic subunit (310 aa).

Carbamoyl phosphate contacts are provided by Arg-55 and Thr-56. Lys-83 lines the L-aspartate pocket. Carbamoyl phosphate-binding residues include Arg-105, His-136, and Gln-139. The L-aspartate site is built by Arg-169 and Arg-223. The carbamoyl phosphate site is built by Gly-264 and Pro-265.

Belongs to the aspartate/ornithine carbamoyltransferase superfamily. ATCase family. As to quaternary structure, heterododecamer (2C3:3R2) of six catalytic PyrB chains organized as two trimers (C3), and six regulatory PyrI chains organized as three dimers (R2).

It carries out the reaction carbamoyl phosphate + L-aspartate = N-carbamoyl-L-aspartate + phosphate + H(+). It functions in the pathway pyrimidine metabolism; UMP biosynthesis via de novo pathway; (S)-dihydroorotate from bicarbonate: step 2/3. Catalyzes the condensation of carbamoyl phosphate and aspartate to form carbamoyl aspartate and inorganic phosphate, the committed step in the de novo pyrimidine nucleotide biosynthesis pathway. The polypeptide is Aspartate carbamoyltransferase catalytic subunit (Saccharopolyspora erythraea (strain ATCC 11635 / DSM 40517 / JCM 4748 / NBRC 13426 / NCIMB 8594 / NRRL 2338)).